A 633-amino-acid polypeptide reads, in one-letter code: Pesticidal crystal protein Cry2Aa (633 aa).

The protein belongs to the delta endotoxin family.

Its function is as follows. Promotes colloidosmotic lysis by binding to the midgut epithelial cells of both dipteran (Aedes aegypti) and lepidopteran (Manduca sexta) larvae. This Bacillus thuringiensis subsp. kenyae protein is Pesticidal crystal protein Cry2Aa (cry2Aa).